The following is a 607-amino-acid chain: UvrABC system protein C (607 aa).

One can recognise a GIY-YIG domain in the interval 16-94 (GRPGVYRMFD…IKEWRPPYNI (79 aa)). The region spanning 203 to 238 (NALTDELSAGMEQAASTLDFEKAAELRDQISLLRRV) is the UVR domain.

Belongs to the UvrC family. As to quaternary structure, interacts with UvrB in an incision complex.

The protein localises to the cytoplasm. Functionally, the UvrABC repair system catalyzes the recognition and processing of DNA lesions. UvrC both incises the 5' and 3' sides of the lesion. The N-terminal half is responsible for the 3' incision and the C-terminal half is responsible for the 5' incision. This chain is UvrABC system protein C, found in Pseudomonas protegens (strain DSM 19095 / LMG 27888 / CFBP 6595 / CHA0).